The chain runs to 179 residues: Large ribosomal subunit protein uL6 (179 aa).

The protein belongs to the universal ribosomal protein uL6 family. Part of the 50S ribosomal subunit.

In terms of biological role, this protein binds to the 23S rRNA, and is important in its secondary structure. It is located near the subunit interface in the base of the L7/L12 stalk, and near the tRNA binding site of the peptidyltransferase center. In Pelodictyon phaeoclathratiforme (strain DSM 5477 / BU-1), this protein is Large ribosomal subunit protein uL6.